The chain runs to 697 residues: Long-chain-fatty-acid--CoA ligase 6 (697 aa).

The helical; Signal-anchor for type III membrane protein transmembrane segment at 25 to 45 (LSATTLVSVGALAAVLAYWLT) threads the bilayer. Residues 46 to 697 (HRPKALQPPC…QIEELYLVSV (652 aa)) are Cytoplasmic-facing.

It belongs to the ATP-dependent AMP-binding enzyme family. Mg(2+) is required as a cofactor.

It localises to the mitochondrion outer membrane. It is found in the peroxisome membrane. The protein localises to the microsome membrane. Its subcellular location is the endoplasmic reticulum membrane. It catalyses the reaction a long-chain fatty acid + ATP + CoA = a long-chain fatty acyl-CoA + AMP + diphosphate. The enzyme catalyses (5Z,8Z,11Z,14Z)-eicosatetraenoate + ATP + CoA = (5Z,8Z,11Z,14Z)-eicosatetraenoyl-CoA + AMP + diphosphate. It carries out the reaction 15-hydroxy-(5Z,8Z,11Z,13E)-eicosatetraenoate + ATP + CoA = 15-hydroxy-(5Z,8Z,11Z,13E)-eicosatetraenoyl-CoA + AMP + diphosphate. The catalysed reaction is 12-hydroxy-(5Z,8Z,10E,14Z)-eicosatetraenoate + ATP + CoA = 12-hydroxy-(5Z,8Z,10E,14Z)-eicosatetraenoyl-CoA + AMP + diphosphate. It catalyses the reaction 5-hydroxy-(6E,8Z,11Z,14Z)-eicosatetraenoate + ATP + CoA = 5-hydroxy-(6E,8Z,11Z,14Z)-eicosatetraenoyl-CoA + AMP + diphosphate. The enzyme catalyses hexadecanoate + ATP + CoA = hexadecanoyl-CoA + AMP + diphosphate. It carries out the reaction (E)-hexadec-2-enoate + ATP + CoA = (2E)-hexadecenoyl-CoA + AMP + diphosphate. Its function is as follows. Catalyzes the conversion of long-chain fatty acids to their active form acyl-CoA for both synthesis of cellular lipids, and degradation via beta-oxidation. Plays an important role in fatty acid metabolism in brain and the acyl-CoAs produced may be utilized exclusively for the synthesis of the brain lipid. This is Long-chain-fatty-acid--CoA ligase 6 (Acsl6) from Mus musculus (Mouse).